Reading from the N-terminus, the 154-residue chain is MNRIEGHLLAADLRFAIVSTRWNHLIVDRLVEGAELAFVQHGGKSENLDHFIVPGSHELPLVARRLAETGKYDAVVCLGAVIRGDTDHYKFVAGGAASGILNSALHTGVPIAFGVLTTETVEQALNRAGIKAGNKGAEATLAMIETVNLLRQIR.

Residues Trp-22, 56–58 (SHE), and 80–82 (AVI) each bind 5-amino-6-(D-ribitylamino)uracil. (2S)-2-hydroxy-3-oxobutyl phosphate is bound at residue 85–86 (DT). The Proton donor role is filled by His-88. Phe-113 is a 5-amino-6-(D-ribitylamino)uracil binding site. Arg-127 contacts (2S)-2-hydroxy-3-oxobutyl phosphate.

The protein belongs to the DMRL synthase family.

The catalysed reaction is (2S)-2-hydroxy-3-oxobutyl phosphate + 5-amino-6-(D-ribitylamino)uracil = 6,7-dimethyl-8-(1-D-ribityl)lumazine + phosphate + 2 H2O + H(+). Its pathway is cofactor biosynthesis; riboflavin biosynthesis; riboflavin from 2-hydroxy-3-oxobutyl phosphate and 5-amino-6-(D-ribitylamino)uracil: step 1/2. Catalyzes the formation of 6,7-dimethyl-8-ribityllumazine by condensation of 5-amino-6-(D-ribitylamino)uracil with 3,4-dihydroxy-2-butanone 4-phosphate. This is the penultimate step in the biosynthesis of riboflavin. In Deinococcus geothermalis (strain DSM 11300 / CIP 105573 / AG-3a), this protein is 6,7-dimethyl-8-ribityllumazine synthase.